A 247-amino-acid chain; its full sequence is 1-(5-phosphoribosyl)-5-[(5-phosphoribosylamino)methylideneamino] imidazole-4-carboxamide isomerase (247 aa).

D8 serves as the catalytic Proton acceptor. The active-site Proton donor is the D129.

Belongs to the HisA/HisF family.

It localises to the cytoplasm. It carries out the reaction 1-(5-phospho-beta-D-ribosyl)-5-[(5-phospho-beta-D-ribosylamino)methylideneamino]imidazole-4-carboxamide = 5-[(5-phospho-1-deoxy-D-ribulos-1-ylimino)methylamino]-1-(5-phospho-beta-D-ribosyl)imidazole-4-carboxamide. The protein operates within amino-acid biosynthesis; L-histidine biosynthesis; L-histidine from 5-phospho-alpha-D-ribose 1-diphosphate: step 4/9. The sequence is that of 1-(5-phosphoribosyl)-5-[(5-phosphoribosylamino)methylideneamino] imidazole-4-carboxamide isomerase from Rhodospirillum centenum (strain ATCC 51521 / SW).